We begin with the raw amino-acid sequence, 144 residues long: uncharacterized protein (144 aa).

4 consecutive transmembrane segments (helical) span residues 16–36, 48–68, 87–107, and 120–140; these read FLIF…GAIF, GFIV…ALII, LLPE…LVLL, and VMSL…WYFG.

It localises to the cell membrane. This is an uncharacterized protein from Methanocaldococcus jannaschii (strain ATCC 43067 / DSM 2661 / JAL-1 / JCM 10045 / NBRC 100440) (Methanococcus jannaschii).